A 284-amino-acid polypeptide reads, in one-letter code: L-ribulose-5-phosphate 3-epimerase UlaE (284 aa).

It belongs to the L-ribulose-5-phosphate 3-epimerase family.

It carries out the reaction L-ribulose 5-phosphate = L-xylulose 5-phosphate. It participates in cofactor degradation; L-ascorbate degradation; D-xylulose 5-phosphate from L-ascorbate: step 3/4. Its function is as follows. Catalyzes the isomerization of L-xylulose-5-phosphate to L-ribulose-5-phosphate. Is involved in the anaerobic L-ascorbate utilization. The protein is L-ribulose-5-phosphate 3-epimerase UlaE of Escherichia coli O139:H28 (strain E24377A / ETEC).